Reading from the N-terminus, the 530-residue chain is C2H2-type transcription factor MSN2 (530 aa).

2 consecutive C2H2-type zinc fingers follow at residues 409–432 and 438–460; these read FVCDLCNRRFRRQEHLKRHYRSLH and FECNECGKKFSRSDNLAQHARTH.

The protein resides in the nucleus. The protein localises to the cytoplasm. Its function is as follows. Transcription factor that acts as a key downstream transcription factor in the HOG1-MAPK pathway. Plays crucial roles in the regulation of conidiation, virulence and multi-stress responses. In addition to regulating the expression of genes specifically involved in stress-response, conidiation and virulence, controls also expression of cellular signaling factors. The protein is C2H2-type transcription factor MSN2 of Metarhizium robertsii (strain ARSEF 23 / ATCC MYA-3075) (Metarhizium anisopliae (strain ARSEF 23)).